Reading from the N-terminus, the 396-residue chain is 1-deoxy-D-xylulose 5-phosphate reductoisomerase (396 aa).

Residues Thr17, Gly18, Ser19, Ile20, Asn47, and Asn130 each coordinate NADPH. Lys131 provides a ligand contact to 1-deoxy-D-xylulose 5-phosphate. An NADPH-binding site is contributed by Glu132. Position 156 (Asp156) interacts with Mn(2+). Positions 157, 158, 182, and 205 each coordinate 1-deoxy-D-xylulose 5-phosphate. Position 158 (Glu158) interacts with Mn(2+). An NADPH-binding site is contributed by Gly211. 1-deoxy-D-xylulose 5-phosphate is bound by residues Ser218, Asn223, Lys224, and Glu227. Glu227 is a binding site for Mn(2+).

The protein belongs to the DXR family. Mg(2+) serves as cofactor. Mn(2+) is required as a cofactor.

The enzyme catalyses 2-C-methyl-D-erythritol 4-phosphate + NADP(+) = 1-deoxy-D-xylulose 5-phosphate + NADPH + H(+). It participates in isoprenoid biosynthesis; isopentenyl diphosphate biosynthesis via DXP pathway; isopentenyl diphosphate from 1-deoxy-D-xylulose 5-phosphate: step 1/6. Catalyzes the NADPH-dependent rearrangement and reduction of 1-deoxy-D-xylulose-5-phosphate (DXP) to 2-C-methyl-D-erythritol 4-phosphate (MEP). The sequence is that of 1-deoxy-D-xylulose 5-phosphate reductoisomerase from Rhizobium etli (strain CIAT 652).